The sequence spans 148 residues: SsrA-binding protein (148 aa).

Residues 123–148 (KLHDKRETEKKRDWEREKARIMRSAT) are disordered. Over residues 126 to 142 (DKRETEKKRDWEREKAR) the composition is skewed to basic and acidic residues.

Belongs to the SmpB family.

The protein localises to the cytoplasm. In terms of biological role, required for rescue of stalled ribosomes mediated by trans-translation. Binds to transfer-messenger RNA (tmRNA), required for stable association of tmRNA with ribosomes. tmRNA and SmpB together mimic tRNA shape, replacing the anticodon stem-loop with SmpB. tmRNA is encoded by the ssrA gene; the 2 termini fold to resemble tRNA(Ala) and it encodes a 'tag peptide', a short internal open reading frame. During trans-translation Ala-aminoacylated tmRNA acts like a tRNA, entering the A-site of stalled ribosomes, displacing the stalled mRNA. The ribosome then switches to translate the ORF on the tmRNA; the nascent peptide is terminated with the 'tag peptide' encoded by the tmRNA and targeted for degradation. The ribosome is freed to recommence translation, which seems to be the essential function of trans-translation. This Burkholderia thailandensis (strain ATCC 700388 / DSM 13276 / CCUG 48851 / CIP 106301 / E264) protein is SsrA-binding protein.